A 667-amino-acid polypeptide reads, in one-letter code: Heat shock protein DDB_G0283913 (667 aa).

The next 2 helical transmembrane spans lie at 2–22 and 224–244; these read FVGT…KKIL and MFIC…LNEL. A coiled-coil region spans residues 18–82; it reads IKKILKRKKE…ELAKKLNCYI (65 aa). Residues 432–478 form a disordered region; that stretch reads IDDTIQDNDKSGSEVSTPTISSSSSSPLQPIIKDEKDDNIENKSDEA. Residues 444 to 457 are compositionally biased toward low complexity; sequence SEVSTPTISSSSSS. Positions 463 to 477 are enriched in basic and acidic residues; that stretch reads IKDEKDDNIENKSDE. One can recognise a sHSP domain in the interval 551–667; that stretch reads MVFSSGFKPF…VITFKFEKIG (117 aa).

The protein belongs to the small heat shock protein (HSP20) family.

The protein localises to the membrane. This Dictyostelium discoideum (Social amoeba) protein is Heat shock protein DDB_G0283913.